The primary structure comprises 278 residues: Release factor glutamine methyltransferase (278 aa).

S-adenosyl-L-methionine is bound by residues 120–124, aspartate 143, and asparagine 184; that span reads GTGTG. Residue 184–187 coordinates substrate; the sequence is NPPY.

Belongs to the protein N5-glutamine methyltransferase family. PrmC subfamily.

The catalysed reaction is L-glutaminyl-[peptide chain release factor] + S-adenosyl-L-methionine = N(5)-methyl-L-glutaminyl-[peptide chain release factor] + S-adenosyl-L-homocysteine + H(+). In terms of biological role, methylates the class 1 translation termination release factors RF1/PrfA and RF2/PrfB on the glutamine residue of the universally conserved GGQ motif. This is Release factor glutamine methyltransferase from Deinococcus radiodurans (strain ATCC 13939 / DSM 20539 / JCM 16871 / CCUG 27074 / LMG 4051 / NBRC 15346 / NCIMB 9279 / VKM B-1422 / R1).